The primary structure comprises 76 residues: Small ribosomal subunit protein bS18 (76 aa).

The protein belongs to the bacterial ribosomal protein bS18 family. In terms of assembly, part of the 30S ribosomal subunit. Forms a tight heterodimer with protein bS6.

Its function is as follows. Binds as a heterodimer with protein bS6 to the central domain of the 16S rRNA, where it helps stabilize the platform of the 30S subunit. This is Small ribosomal subunit protein bS18 from Xylella fastidiosa (strain 9a5c).